The chain runs to 91 residues: Gem-associated protein 7 homolog (91 aa).

Residues 18-86 (LKFYQKMASA…VVGIEYNLVQ (69 aa)) enclose the Sm domain.

Belongs to the gemin-7 family. In terms of assembly, part of the core SMN complex at least composed of smn1, yip11/gem2, gem6, gem7 and gem8. Interacts with gem6; the interaction is direct. Interacts with gem8; the interaction is direct.

This is Gem-associated protein 7 homolog from Schizosaccharomyces pombe (strain 972 / ATCC 24843) (Fission yeast).